The primary structure comprises 341 residues: HTH-type transcriptional repressor PurR (341 aa).

The region spanning 2–56 (ATIKDVAKRAGVSTTTVSHVINKTRFVAENTRAAVWAAIKELNYSPSAVARSLKV) is the HTH lacI-type domain. Residues 4–23 (IKDVAKRAGVSTTTVSHVIN) constitute a DNA-binding region (H-T-H motif). A DNA-binding region spans residues 48–56 (SAVARSLKV). Hypoxanthine-binding residues include tyrosine 73, arginine 190, threonine 192, phenylalanine 221, and aspartate 275.

As to quaternary structure, homodimer.

It functions in the pathway purine metabolism; purine nucleotide biosynthesis [regulation]. In terms of biological role, is the main repressor of the genes involved in the de novo synthesis of purine nucleotides, regulating purB, purC, purEK, purF, purHD, purL, purMN and guaBA expression. PurR is allosterically activated to bind its cognate DNA by binding the purine corepressors, hypoxanthine or guanine, thereby effecting transcription repression. This chain is HTH-type transcriptional repressor PurR, found in Proteus mirabilis (strain HI4320).